We begin with the raw amino-acid sequence, 469 residues long: E3 ubiquitin-protein ligase pellino homolog 3 (469 aa).

The disordered stretch occupies residues 1-39 (MVLEGNPEVGSPRTSDLQHRGNKGSCVLSSPGEDAQPGE). Phosphoserine is present on S11.

The protein belongs to the pellino family. As to quaternary structure, interacts with TRAF6, MAP3K14 and MAP3K7. Phosphorylated by IRAK1 enhancing its E3 ligase activity. Highly expressed in brain, heart and testis, and at lower level in kidney, liver, lung, placenta, small intestine, spleen and stomach. Isoform 1 is not expressed in lung.

It carries out the reaction S-ubiquitinyl-[E2 ubiquitin-conjugating enzyme]-L-cysteine + [acceptor protein]-L-lysine = [E2 ubiquitin-conjugating enzyme]-L-cysteine + N(6)-ubiquitinyl-[acceptor protein]-L-lysine.. It participates in protein modification; protein ubiquitination. Its function is as follows. E3 ubiquitin ligase catalyzing the covalent attachment of ubiquitin moieties onto substrate proteins. Involved in the TLR and IL-1 signaling pathways via interaction with the complex containing IRAK kinases and TRAF6. Mediates 'Lys-63'-linked polyubiquitination of IRAK1. Can activate AP1/JUN and ELK1. Acts as a regulator of innate immunity by mediating 'Lys-63'-linked polyubiquitination of RIPK2 downstream of NOD1 and NOD2, thereby transforming RIPK2 into a scaffolding protein for downstream effectors, ultimately leading to activation of the NF-kappa-B and MAP kinases signaling. Catalyzes 'Lys-63'-linked polyubiquitination of RIPK2 in parallel of XIAP. In Homo sapiens (Human), this protein is E3 ubiquitin-protein ligase pellino homolog 3.